The following is a 401-amino-acid chain: Dual-specificity RNA methyltransferase RlmN (401 aa).

Residue Glu114 is the Proton acceptor of the active site. Residues 120–365 (DKTRGTLCVS…TMVRRTRGDD (246 aa)) enclose the Radical SAM core domain. Cysteines 127 and 370 form a disulfide. Residues Cys134, Cys138, and Cys141 each coordinate [4Fe-4S] cluster. Residues 187 to 188 (GE), Ser219, 241 to 243 (SLH), and Asn327 each bind S-adenosyl-L-methionine. Cys370 functions as the S-methylcysteine intermediate in the catalytic mechanism.

This sequence belongs to the radical SAM superfamily. RlmN family. [4Fe-4S] cluster serves as cofactor.

The protein localises to the cytoplasm. The enzyme catalyses adenosine(2503) in 23S rRNA + 2 reduced [2Fe-2S]-[ferredoxin] + 2 S-adenosyl-L-methionine = 2-methyladenosine(2503) in 23S rRNA + 5'-deoxyadenosine + L-methionine + 2 oxidized [2Fe-2S]-[ferredoxin] + S-adenosyl-L-homocysteine. It catalyses the reaction adenosine(37) in tRNA + 2 reduced [2Fe-2S]-[ferredoxin] + 2 S-adenosyl-L-methionine = 2-methyladenosine(37) in tRNA + 5'-deoxyadenosine + L-methionine + 2 oxidized [2Fe-2S]-[ferredoxin] + S-adenosyl-L-homocysteine. Functionally, specifically methylates position 2 of adenine 2503 in 23S rRNA and position 2 of adenine 37 in tRNAs. m2A2503 modification seems to play a crucial role in the proofreading step occurring at the peptidyl transferase center and thus would serve to optimize ribosomal fidelity. The chain is Dual-specificity RNA methyltransferase RlmN from Stenotrophomonas maltophilia (strain R551-3).